Reading from the N-terminus, the 118-residue chain is Ribonuclease P protein component (118 aa).

Belongs to the RnpA family. In terms of assembly, consists of a catalytic RNA component (M1 or rnpB) and a protein subunit.

It carries out the reaction Endonucleolytic cleavage of RNA, removing 5'-extranucleotides from tRNA precursor.. In terms of biological role, RNaseP catalyzes the removal of the 5'-leader sequence from pre-tRNA to produce the mature 5'-terminus. It can also cleave other RNA substrates such as 4.5S RNA. The protein component plays an auxiliary but essential role in vivo by binding to the 5'-leader sequence and broadening the substrate specificity of the ribozyme. This chain is Ribonuclease P protein component, found in Desulfatibacillum aliphaticivorans.